We begin with the raw amino-acid sequence, 250 residues long: uncharacterized protein (250 aa).

2 disordered regions span residues asparagine 85–proline 107 and glutamate 158–proline 198. The span at proline 167–glutamine 176 shows a compositional bias: low complexity.

This is an uncharacterized protein from Mycoplasma pneumoniae (strain ATCC 29342 / M129 / Subtype 1) (Mycoplasmoides pneumoniae).